The following is a 393-amino-acid chain: MLSAAMEYLRSCWGPASSPAGRPRKGSDAAGRQDGLLWYKDAGQLVAGEFSMAVVQANNLLEDHSQVESGPLSTTDPNLQGTLVGVYDGHGGPETARYINDHLFNHLRGFASEHKCMSADVIRKAFRATEEGFFSVVSSQWSMRPQLAAVGSCCLVGVICAGNLYIANLGDSRAVLGRLVKGTGEVLAMQLSAEHNASFEEVRRELQAAHPDDPHIVVLKHNVWRVKGIIQITRSIGDVYLKKPEFNREPLHSKFRLQETFRRPLLSSEPAIVVHQLQTTDQFIIFASDGLWEHISNQEAVDLVQHNPRNGIARRLVKAAMQQAAKKREMRYSDLKKIDRGVRRHFHDDITVVVVFFDSNAITTANWSRPSVSLRGGGVTLPANSLAPFSVPT.

The PPM-type phosphatase domain occupies 49-357 (EFSMAVVQAN…DDITVVVVFF (309 aa)). D88 and G89 together coordinate Mn(2+). Residues 147–167 (LAAVGSCCLVGVICAGNLYIA) form a helical membrane-spanning segment. Residues D289 and D348 each coordinate Mn(2+).

It belongs to the PP2C family. It depends on Mg(2+) as a cofactor. Requires Mn(2+) as cofactor.

It localises to the membrane. The enzyme catalyses O-phospho-L-seryl-[protein] + H2O = L-seryl-[protein] + phosphate. It carries out the reaction O-phospho-L-threonyl-[protein] + H2O = L-threonyl-[protein] + phosphate. The sequence is that of Probable protein phosphatase 2C 72 from Oryza sativa subsp. japonica (Rice).